The primary structure comprises 131 residues: NADPH-dependent 7-cyano-7-deazaguanine reductase (131 aa).

C41 (thioimide intermediate) is an active-site residue. D48 serves as the catalytic Proton donor. Substrate-binding positions include 63–65 (VEL) and 82–83 (HE).

Belongs to the GTP cyclohydrolase I family. QueF type 1 subfamily.

The protein resides in the cytoplasm. It catalyses the reaction 7-aminomethyl-7-carbaguanine + 2 NADP(+) = 7-cyano-7-deazaguanine + 2 NADPH + 3 H(+). It functions in the pathway tRNA modification; tRNA-queuosine biosynthesis. In terms of biological role, catalyzes the NADPH-dependent reduction of 7-cyano-7-deazaguanine (preQ0) to 7-aminomethyl-7-deazaguanine (preQ1). The polypeptide is NADPH-dependent 7-cyano-7-deazaguanine reductase (Nitratiruptor sp. (strain SB155-2)).